Here is a 374-residue protein sequence, read N- to C-terminus: Dual-specificity RNA methyltransferase RlmN (374 aa).

The active-site Proton acceptor is the Glu94. A Radical SAM core domain is found at 100 to 339 (EEDRATLCVS…VTIRKTRGDD (240 aa)). A disulfide bridge links Cys107 with Cys344. Positions 114, 118, and 121 each coordinate [4Fe-4S] cluster. S-adenosyl-L-methionine-binding positions include 168 to 169 (GE), Ser200, 222 to 224 (SLH), and Asn301. Cys344 functions as the S-methylcysteine intermediate in the catalytic mechanism.

It belongs to the radical SAM superfamily. RlmN family. It depends on [4Fe-4S] cluster as a cofactor.

It localises to the cytoplasm. It catalyses the reaction adenosine(2503) in 23S rRNA + 2 reduced [2Fe-2S]-[ferredoxin] + 2 S-adenosyl-L-methionine = 2-methyladenosine(2503) in 23S rRNA + 5'-deoxyadenosine + L-methionine + 2 oxidized [2Fe-2S]-[ferredoxin] + S-adenosyl-L-homocysteine. The enzyme catalyses adenosine(37) in tRNA + 2 reduced [2Fe-2S]-[ferredoxin] + 2 S-adenosyl-L-methionine = 2-methyladenosine(37) in tRNA + 5'-deoxyadenosine + L-methionine + 2 oxidized [2Fe-2S]-[ferredoxin] + S-adenosyl-L-homocysteine. In terms of biological role, specifically methylates position 2 of adenine 2503 in 23S rRNA and position 2 of adenine 37 in tRNAs. m2A2503 modification seems to play a crucial role in the proofreading step occurring at the peptidyl transferase center and thus would serve to optimize ribosomal fidelity. The chain is Dual-specificity RNA methyltransferase RlmN from Vibrio vulnificus (strain YJ016).